We begin with the raw amino-acid sequence, 180 residues long: Crossover junction endodeoxyribonuclease RuvC (180 aa).

Residues D7, E66, and D138 contribute to the active site. Residues D7, E66, and D138 each coordinate Mg(2+).

This sequence belongs to the RuvC family. In terms of assembly, homodimer which binds Holliday junction (HJ) DNA. The HJ becomes 2-fold symmetrical on binding to RuvC with unstacked arms; it has a different conformation from HJ DNA in complex with RuvA. In the full resolvosome a probable DNA-RuvA(4)-RuvB(12)-RuvC(2) complex forms which resolves the HJ. Requires Mg(2+) as cofactor.

The protein resides in the cytoplasm. It carries out the reaction Endonucleolytic cleavage at a junction such as a reciprocal single-stranded crossover between two homologous DNA duplexes (Holliday junction).. The RuvA-RuvB-RuvC complex processes Holliday junction (HJ) DNA during genetic recombination and DNA repair. Endonuclease that resolves HJ intermediates. Cleaves cruciform DNA by making single-stranded nicks across the HJ at symmetrical positions within the homologous arms, yielding a 5'-phosphate and a 3'-hydroxyl group; requires a central core of homology in the junction. The consensus cleavage sequence is 5'-(A/T)TT(C/G)-3'. Cleavage occurs on the 3'-side of the TT dinucleotide at the point of strand exchange. HJ branch migration catalyzed by RuvA-RuvB allows RuvC to scan DNA until it finds its consensus sequence, where it cleaves and resolves the cruciform DNA. In Burkholderia pseudomallei (strain 668), this protein is Crossover junction endodeoxyribonuclease RuvC.